The following is a 182-amino-acid chain: Adenine phosphoribosyltransferase (182 aa).

It belongs to the purine/pyrimidine phosphoribosyltransferase family. As to quaternary structure, homodimer.

It localises to the cytoplasm. The enzyme catalyses AMP + diphosphate = 5-phospho-alpha-D-ribose 1-diphosphate + adenine. It participates in purine metabolism; AMP biosynthesis via salvage pathway; AMP from adenine: step 1/1. Its function is as follows. Catalyzes a salvage reaction resulting in the formation of AMP, that is energically less costly than de novo synthesis. The sequence is that of Adenine phosphoribosyltransferase from Wolinella succinogenes (strain ATCC 29543 / DSM 1740 / CCUG 13145 / JCM 31913 / LMG 7466 / NCTC 11488 / FDC 602W) (Vibrio succinogenes).